We begin with the raw amino-acid sequence, 358 residues long: Protein RecA 2 (358 aa).

69–76 (GPESSGKT) serves as a coordination point for ATP. Residues 331 to 358 (GIGKSGAPSPRRRTSPRRPKVAARSAAV) form a disordered region. A compositionally biased stretch (basic residues) spans 340–351 (PRRRTSPRRPKV).

Belongs to the RecA family.

It is found in the cytoplasm. Can catalyze the hydrolysis of ATP in the presence of single-stranded DNA, the ATP-dependent uptake of single-stranded DNA by duplex DNA, and the ATP-dependent hybridization of homologous single-stranded DNAs. It interacts with LexA causing its activation and leading to its autocatalytic cleavage. The chain is Protein RecA 2 from Myxococcus xanthus.